Consider the following 120-residue polypeptide: Large ribosomal subunit protein bL20c (120 aa).

Belongs to the bacterial ribosomal protein bL20 family.

The protein resides in the plastid. In terms of biological role, binds directly to 23S ribosomal RNA and is necessary for the in vitro assembly process of the 50S ribosomal subunit. It is not involved in the protein synthesizing functions of that subunit. The sequence is that of Large ribosomal subunit protein bL20c from Cuscuta obtusiflora (Peruvian dodder).